A 482-amino-acid polypeptide reads, in one-letter code: tRNA sulfurtransferase (482 aa).

The THUMP domain maps to 58–160 (VEALQELSRV…GNKAYLYSNV (103 aa)). ATP-binding positions include 178-179 (LF), 203-204 (HY), R260, G282, and Q291. Cysteines 341 and 444 form a disulfide. The 83-residue stretch at 400-482 (IPGDSIIIDV…RYRAGLEKTR (83 aa)) folds into the Rhodanese domain. C444 serves as the catalytic Cysteine persulfide intermediate.

Belongs to the ThiI family.

It localises to the cytoplasm. The catalysed reaction is [ThiI sulfur-carrier protein]-S-sulfanyl-L-cysteine + a uridine in tRNA + 2 reduced [2Fe-2S]-[ferredoxin] + ATP + H(+) = [ThiI sulfur-carrier protein]-L-cysteine + a 4-thiouridine in tRNA + 2 oxidized [2Fe-2S]-[ferredoxin] + AMP + diphosphate. The enzyme catalyses [ThiS sulfur-carrier protein]-C-terminal Gly-Gly-AMP + S-sulfanyl-L-cysteinyl-[cysteine desulfurase] + AH2 = [ThiS sulfur-carrier protein]-C-terminal-Gly-aminoethanethioate + L-cysteinyl-[cysteine desulfurase] + A + AMP + 2 H(+). It participates in cofactor biosynthesis; thiamine diphosphate biosynthesis. Functionally, catalyzes the ATP-dependent transfer of a sulfur to tRNA to produce 4-thiouridine in position 8 of tRNAs, which functions as a near-UV photosensor. Also catalyzes the transfer of sulfur to the sulfur carrier protein ThiS, forming ThiS-thiocarboxylate. This is a step in the synthesis of thiazole, in the thiamine biosynthesis pathway. The sulfur is donated as persulfide by IscS. The chain is tRNA sulfurtransferase from Desulfurococcus amylolyticus (strain DSM 18924 / JCM 16383 / VKM B-2413 / 1221n) (Desulfurococcus kamchatkensis).